The primary structure comprises 646 residues: MGNYKPSIKQYVVTVKAIKSSQFGRLGICAVVLLFVLGYPFYFISNNPFDTSIRYQYVDPYNDTTRKYTTIEKQHTDIGGNGTTILYPKNLQLDQTALSQLLNTTETTNPFVQYIGNSSSIAFSQLNQTLVNHSIQVFDPFSNSDNCSDLMTETQLTISQNIIIKESFEIMVKRLMHQLDTEPAFKELAPFFQNKLSLHLRMRSYHKHFYKFARTSVWLKDYGVHLMISRVIYSQKGKKGDPQISLLYTQLYDTNWQELTNTDLLVSMQDITGEYKLEKLQFPRFLPMPFYYNPKLTKGRWYGPEDARIMLVKNQLDMEEPVVIYNSYHRQIANHTTTGKTDGSVELNFEFYRSMFVGWPFRYQLGKSNTDGFVDDRFDNVKFTRVAELKIHNQTRASIEKNWTPFVDPSERDPEDKSLYIVYQWDKLRILKCDISNLVTDDGFIHYSACRFKQDTKHDEVEKVGPIRGGTELIPTIINNKQLWVGFLRAHIDKCGCGKAMYRPNMVVLQKTDMGTFQVAYLSSYISFNIPVPGWKTHEIQCGKRDPNVLIPNGISNWEVATIDGIERDVLTMTLSAADEDNILMDIHGLKTVIKNLITNQKHGNEFNSDSVQMKCVVAYSIEFCRAYGEEQARLGLTGGWLPSHN.

At 1–25 (MGNYKPSIKQYVVTVKAIKSSQFGR) the chain is on the cytoplasmic side. A helical transmembrane segment spans residues 26 to 46 (LGICAVVLLFVLGYPFYFISN). Residues 47–646 (NPFDTSIRYQ…LTGGWLPSHN (600 aa)) are Extracellular-facing. N-linked (GlcNAc...) asparagine glycosylation is found at N62, N81, N103, N117, N127, N132, N146, N334, and N393.

It belongs to the BMT family.

It is found in the membrane. Beta-mannosyltransferase involved in cell wall biosynthesis. Required for beta-1,2-mannose transfer on phospholipomannan. Required for pro-inflammatory response in macrophages through phospholipomannan-induced TNF-alpha production. In Candida albicans (strain SC5314 / ATCC MYA-2876) (Yeast), this protein is Beta-mannosyltransferase 6 (BMT6).